A 235-amino-acid chain; its full sequence is 1-(5-phosphoribosyl)-5-[(5-phosphoribosylamino)methylideneamino] imidazole-4-carboxamide isomerase (235 aa).

Catalysis depends on Asp-8, which acts as the Proton acceptor. The active-site Proton donor is the Asp-129.

This sequence belongs to the HisA/HisF family.

It is found in the cytoplasm. The enzyme catalyses 1-(5-phospho-beta-D-ribosyl)-5-[(5-phospho-beta-D-ribosylamino)methylideneamino]imidazole-4-carboxamide = 5-[(5-phospho-1-deoxy-D-ribulos-1-ylimino)methylamino]-1-(5-phospho-beta-D-ribosyl)imidazole-4-carboxamide. Its pathway is amino-acid biosynthesis; L-histidine biosynthesis; L-histidine from 5-phospho-alpha-D-ribose 1-diphosphate: step 4/9. The protein is 1-(5-phosphoribosyl)-5-[(5-phosphoribosylamino)methylideneamino] imidazole-4-carboxamide isomerase of Thermoanaerobacter sp. (strain X514).